Here is a 683-residue protein sequence, read N- to C-terminus: Leucine-rich repeat and calponin homology domain-containing protein 4 (683 aa).

Residues 1-18 (MAAAVAAPLAAGGEEAAA) are compositionally biased toward low complexity. The segment at 1-34 (MAAAVAAPLAAGGEEAAATTSVPGSPGLPGRRSA) is disordered. LRR repeat units follow at residues 41–64 (AVAT…AARS), 67–90 (LSDI…ACQL), 92–113 (SLEG…LGNL), 114–136 (TALT…ICQL), 138–158 (LRVL…IGTL), 159–181 (GSLR…LCGL), 182–204 (SSLR…LGDL), 206–226 (LVRL…FCRL), and 227–250 (RHLQ…CLKG). A disordered region spans residues 268 to 292 (ALGDLAPSRPPSFSPCPAEDLFPGH). Phosphoserine occurs at positions 279, 281, 304, 307, 309, and 313. 2 disordered regions span residues 326–436 (FRIS…LLKP) and 449–539 (STQA…DEKD). Basic and acidic residues-rich tracts occupy residues 330–345 (ELAR…KEDG), 357–376 (IDSH…EQRP), and 384–418 (GDRE…ERRQ). Phosphoserine occurs at positions 432 and 457. Residues 449 to 460 (STQAMHNGSPKS) show a composition bias toward polar residues. Composition is skewed to low complexity over residues 461-481 (SASQ…PASQ) and 511-524 (SSSQ…SPDS). A phosphoserine mark is found at Ser511, Ser513, Ser517, Ser521, and Ser589. The Calponin-homology (CH) domain maps to 534 to 647 (VPDEKDLMTQ…ALEAVKRVGG (114 aa)). A helical transmembrane segment spans residues 653 to 673 (LWPPSGLGGFVVFYVVLMLLL).

It localises to the cell membrane. In terms of biological role, accessory protein that regulates signaling by multiple TLRs, acting as a broad-spanning regulator of the innate immune response. In macrophages, binds LPS and promotes proper docking of LPS in lipid raft membrane. May be required for lipid raft maintenance. The sequence is that of Leucine-rich repeat and calponin homology domain-containing protein 4 from Homo sapiens (Human).